Here is a 339-residue protein sequence, read N- to C-terminus: Ketol-acid reductoisomerase (NADP(+)) (339 aa).

Residues 1-182 enclose the KARI N-terminal Rossmann domain; sequence MRVYYDSDAD…GGGRAGIIET (182 aa). NADP(+) is bound by residues 24-27, Arg-48, Ser-51, and 83-86; these read YGSQ and DEGQ. His-108 is an active-site residue. Gly-134 serves as a coordination point for NADP(+). The KARI C-terminal knotted domain maps to 183 to 328; that stretch reads TFKEECETDL…EKLRAMMPWI (146 aa). The Mg(2+) site is built by Asp-191, Glu-195, Glu-227, and Glu-231. Ser-252 contributes to the substrate binding site.

The protein belongs to the ketol-acid reductoisomerase family. The cofactor is Mg(2+).

It catalyses the reaction (2R)-2,3-dihydroxy-3-methylbutanoate + NADP(+) = (2S)-2-acetolactate + NADPH + H(+). The enzyme catalyses (2R,3R)-2,3-dihydroxy-3-methylpentanoate + NADP(+) = (S)-2-ethyl-2-hydroxy-3-oxobutanoate + NADPH + H(+). It participates in amino-acid biosynthesis; L-isoleucine biosynthesis; L-isoleucine from 2-oxobutanoate: step 2/4. The protein operates within amino-acid biosynthesis; L-valine biosynthesis; L-valine from pyruvate: step 2/4. Functionally, involved in the biosynthesis of branched-chain amino acids (BCAA). Catalyzes an alkyl-migration followed by a ketol-acid reduction of (S)-2-acetolactate (S2AL) to yield (R)-2,3-dihydroxy-isovalerate. In the isomerase reaction, S2AL is rearranged via a Mg-dependent methyl migration to produce 3-hydroxy-3-methyl-2-ketobutyrate (HMKB). In the reductase reaction, this 2-ketoacid undergoes a metal-dependent reduction by NADPH to yield (R)-2,3-dihydroxy-isovalerate. The sequence is that of Ketol-acid reductoisomerase (NADP(+)) from Acidiphilium cryptum (strain JF-5).